The chain runs to 143 residues: UPF0260 protein plu2141 (143 aa).

Belongs to the UPF0260 family.

This Photorhabdus laumondii subsp. laumondii (strain DSM 15139 / CIP 105565 / TT01) (Photorhabdus luminescens subsp. laumondii) protein is UPF0260 protein plu2141.